The sequence spans 101 residues: Large ribosomal subunit protein bL21 (101 aa).

The protein belongs to the bacterial ribosomal protein bL21 family. In terms of assembly, part of the 50S ribosomal subunit. Contacts protein L20.

This protein binds to 23S rRNA in the presence of protein L20. This chain is Large ribosomal subunit protein bL21, found in Beutenbergia cavernae (strain ATCC BAA-8 / DSM 12333 / CCUG 43141 / JCM 11478 / NBRC 16432 / NCIMB 13614 / HKI 0122).